A 1516-amino-acid chain; its full sequence is Myosin-14 (1516 aa).

A Myosin N-terminal SH3-like domain is found at 7–56 (NVGSCVWVEDPEVAWIDGEVIEVKGSDIKVKCTSGKTVAIKVSSAYPKDV). Positions 61–738 (SGVDDMTRLA…QMADLDARRN (678 aa)) constitute a Myosin motor domain. ATP contacts are provided by residues 155–162 (GESGAGKT) and 208–216 (NNNSSRFGK). 4 actin-binding regions span residues 494 to 528 (LIEK…YQTF), 530 to 553 (DHKH…AGDV), 588 to 612 (FPLL…KQQL), and 612 to 634 (LVTL…KPNN). 6 consecutive IQ domains span residues 741–770 (LGRA…VATN), 764–793 (LRKV…DAAV), 789–818 (RDAA…AAVS), 812–841 (LYFA…DKAA), 837–866 (QDKA…AAIT), and 860–889 (LKKA…AAKE). A coiled-coil region spans residues 890 to 1056 (TGVLEAAKSK…ENKILRQKSL (167 aa)). The disordered stretch occupies residues 1061 to 1085 (GHLPPTPVKGSQNGHFSSKESPFNG). The span at 1069-1084 (KGSQNGHFSSKESPFN) shows a compositional bias: polar residues. The Dilute domain occupies 1158–1463 (DRLVQMIGSA…IANMRVLMTE (306 aa)).

This sequence belongs to the TRAFAC class myosin-kinesin ATPase superfamily. Myosin family. Plant myosin class XI subfamily. Homodimer.

In terms of biological role, myosin heavy chain that is required for the cell cycle-regulated transport of various organelles and proteins for their segregation. Functions by binding with its tail domain to receptor proteins on organelles and exerting force with its N-terminal motor domain against actin filaments, thereby transporting its cargo along polarized actin cables. This chain is Myosin-14 (XI-H), found in Arabidopsis thaliana (Mouse-ear cress).